Reading from the N-terminus, the 232-residue chain is DQGAGVTYLEPSASQIGHKESIKDTARVLGRMYDGIEYRGFGQDVVEELAKYAGVPVFNGLTNEFHPTQMFADALTMREHSGKPLNQTAFAYVGDARYNMANSLLVLGAKLGMDVRIGAPKTLWPSENIVARARAVAEETGGKILLTENAEEAVKGADFIHTDVWVSMGEPKEAWQERIDLLKDYRVTPELMAASGNPQVKFMHCLPAFHNRETKVGEWIYETFGLNGVEVT.

Residues Gln-15, Arg-39, and 66–69 (HPTQ) each bind carbamoyl phosphate. Residues Asn-99, Asp-163, and 167–168 (SM) contribute to the L-ornithine site. Carbamoyl phosphate contacts are provided by residues 204-207 (HCLP) and Thr-232.

Belongs to the aspartate/ornithine carbamoyltransferase superfamily. OTCase family.

The protein resides in the cytoplasm. It catalyses the reaction carbamoyl phosphate + L-ornithine = L-citrulline + phosphate + H(+). Its pathway is amino-acid biosynthesis; L-arginine biosynthesis; L-arginine from L-ornithine and carbamoyl phosphate: step 1/3. Reversibly catalyzes the transfer of the carbamoyl group from carbamoyl phosphate (CP) to the N(epsilon) atom of ornithine (ORN) to produce L-citrulline. This is Ornithine carbamoyltransferase (argF) from Neisseria flava.